We begin with the raw amino-acid sequence, 145 residues long: Deoxyuridine 5'-triphosphate nucleotidohydrolase (145 aa).

Residues Arg62–Gly64, Asn75, Thr79–Asp81, and Lys89 each bind substrate.

The protein belongs to the dUTPase family. Mg(2+) serves as cofactor.

It catalyses the reaction dUTP + H2O = dUMP + diphosphate + H(+). It participates in pyrimidine metabolism; dUMP biosynthesis; dUMP from dCTP (dUTP route): step 2/2. In terms of biological role, this enzyme is involved in nucleotide metabolism: it produces dUMP, the immediate precursor of thymidine nucleotides and it decreases the intracellular concentration of dUTP so that uracil cannot be incorporated into DNA. In Helicobacter pylori (strain P12), this protein is Deoxyuridine 5'-triphosphate nucleotidohydrolase.